Consider the following 292-residue polypeptide: 4-hydroxy-tetrahydrodipicolinate synthase (292 aa).

Residue Thr44 coordinates pyruvate. The active-site Proton donor/acceptor is Tyr132. The active-site Schiff-base intermediate with substrate is Lys161. Residue Ile203 coordinates pyruvate.

It belongs to the DapA family. In terms of assembly, homotetramer.

It is found in the cytoplasm. The enzyme catalyses L-aspartate 4-semialdehyde + pyruvate = (2S,4S)-4-hydroxy-2,3,4,5-tetrahydrodipicolinate + H2O + H(+). It functions in the pathway amino-acid biosynthesis; L-lysine biosynthesis via DAP pathway; (S)-tetrahydrodipicolinate from L-aspartate: step 3/4. Its activity is regulated as follows. Is feedback inhibited by lysine. Is competitively inhibited by 2-oxobutyrate with respect to pyruvate. Functionally, catalyzes the condensation of (S)-aspartate-beta-semialdehyde [(S)-ASA] and pyruvate to 4-hydroxy-tetrahydrodipicolinate (HTPA). This is 4-hydroxy-tetrahydrodipicolinate synthase from Rhizobium meliloti (Ensifer meliloti).